The primary structure comprises 156 residues: uncharacterized protein (156 aa).

2 helical membrane passes run 46–66 (GLVL…AGVV) and 114–134 (IIDI…IVAL).

The protein localises to the cell membrane. This is an uncharacterized protein from Haemophilus influenzae (strain ATCC 51907 / DSM 11121 / KW20 / Rd).